Reading from the N-terminus, the 492-residue chain is V-type proton ATPase subunit B 1 (492 aa).

Belongs to the ATPase alpha/beta chains family. In terms of assembly, V-ATPase is a heteromultimeric enzyme composed of a peripheral catalytic V1 complex (main components: subunits A, B, C, D, E, and F) attached to an integral membrane V0 proton pore complex (main component: the proteolipid protein).

Non-catalytic subunit of the peripheral V1 complex of vacuolar ATPase. V-ATPase is responsible for acidifying a variety of intracellular compartments in eukaryotic cells. The sequence is that of V-type proton ATPase subunit B 1 from Acetabularia acetabulum (Mermaid's wine glass).